The following is a 238-amino-acid chain: LRRN4 C-terminal-like protein (238 aa).

An N-terminal signal peptide occupies residues 1 to 22 (MLGSPCLLWLLAVTFLVPRAQP). The Extracellular portion of the chain corresponds to 23–194 (LAPQDFEEEE…RLAVPPNPRT (172 aa)). The Fibronectin type-III domain occupies 82–176 (PPDPPRMGEV…AGGEGLEGAD (95 aa)). Residue Asn132 is glycosylated (N-linked (GlcNAc...) asparagine). The helical transmembrane segment at 195–215 (LVHAAVGVGTALALLSCAALV) threads the bilayer. Residues 216–238 (WHFCLRDRWGCPRRAAARAAGAL) lie on the Cytoplasmic side of the membrane.

The protein resides in the membrane. In Homo sapiens (Human), this protein is LRRN4 C-terminal-like protein (LRRN4CL).